The chain runs to 259 residues: Protein unc-50 homolog (259 aa).

Met-1 carries the post-translational modification N-acetylmethionine. The Cytoplasmic segment spans residues 1–82 (MLPSTSVNSL…TKDQWARDDP (82 aa)). At Ser-6 the chain carries Phosphoserine. Residues 83–103 (AFLVLLSIWLCVSTIGFGFVL) traverse the membrane as a helical segment. At 104 to 115 (DMGFFETIKLLL) the chain is on the lumenal side. Residues 116-136 (WVVLIDCVGVGLLIATLMWFI) traverse the membrane as a helical segment. Residues 137–163 (SNKYLVKRQSRDYDVEWGYAFDVHLNA) lie on the Cytoplasmic side of the membrane. A helical transmembrane segment spans residues 164–184 (FYPLLVILHFIQLFFINHVIL). Over 185–187 (TDT) the chain is Lumenal. Residues 188–208 (FIGYLVGNTLWLVAVGYYIYV) form a helical membrane-spanning segment. At 209 to 222 (TFLGYSALPFLKNT) the chain is on the cytoplasmic side. Residues 223–243 (VILLYPFAPLILLYGLSLALG) traverse the membrane as a helical segment. The Lumenal portion of the chain corresponds to 244-259 (WNFTHTLCSFYKYRVK).

The protein belongs to the unc-50 family. Present in periodontal ligament fibroblasts (at protein level).

The protein resides in the nucleus inner membrane. It localises to the golgi apparatus membrane. Functionally, involved in the cell surface expression of neuronal nicotinic receptors. Binds RNA. The chain is Protein unc-50 homolog (UNC50) from Homo sapiens (Human).